The following is an 82-amino-acid chain: Immediate early response 3-interacting protein 1 (82 aa).

Transmembrane regions (helical) follow at residues 2–22 (AFTLYSLMQAALLCVNAIAVL) and 62–82 (VMRVPLIIVNSITIVLLLLFG).

It belongs to the YOS1 family.

It is found in the endoplasmic reticulum membrane. In terms of biological role, regulator of endoplasmic reticulum secretion that acts as a key determinant of brain size. Required for secretion of extracellular matrix proteins. Required for correct brain development by depositing sufficient extracellular matrix proteins for tissue integrity and the proliferation of neural progenitors. Acts as a regulator of the unfolded protein response (UPR). In Mus musculus (Mouse), this protein is Immediate early response 3-interacting protein 1.